The primary structure comprises 303 residues: Bidirectional sugar transporter SWEET14 (303 aa).

Topologically, residues 1–9 (MAGMSLQHP) are extracellular. A helical membrane pass occupies residues 10-30 (WAFAFGLLGNIISFMTYLAPL). The 86-residue stretch at 13-98 (AFGLLGNIIS…AVYLVYAPKK (86 aa)) folds into the MtN3/slv 1 domain. Residues 31 to 44 (PTFYRIYKSKSTQG) are Cytoplasmic-facing. The helical transmembrane segment at 45–65 (FQSVPYVVALFSAMLWIYYAL) threads the bilayer. Topologically, residues 66–72 (LKSDECL) are extracellular. Residues 73–93 (LITINSAGCVIETIYIAVYLV) form a helical membrane-spanning segment. At 94 to 105 (YAPKKAKMFTAK) the chain is on the cytoplasmic side. The chain crosses the membrane as a helical span at residues 106–126 (LLLLVNVGVFGLILLLTLLLS). At 127 to 133 (AGDRRIV) the chain is on the extracellular side. Residues 134–154 (VLGWVCVGFSVSVFVAPLSII) traverse the membrane as a helical segment. Residues 134–217 (VLGWVCVGFS…MGLYAMYRNS (84 aa)) form the MtN3/slv 2 domain. Topologically, residues 155–167 (RLVVRTKSVEFMP) are cytoplasmic. A helical membrane pass occupies residues 168-188 (FSLSFSLTISAVVWFLYGLLI). Residues 189 to 192 (KDKY) lie on the Extracellular side of the membrane. Residues 193-213 (VALPNVLGFSFGVIQMGLYAM) traverse the membrane as a helical segment. The Cytoplasmic segment spans residues 214-303 (YRNSTPKAVL…AGAGEKKVAA (90 aa)). Residues 266–290 (HPVDVESPPAEAPPEEDDKAAAATA) are disordered.

It belongs to the SWEET sugar transporter family. As to quaternary structure, forms homooligomers and/or heterooligomers.

It localises to the cell membrane. Mediates both low-affinity uptake and efflux of sugar across the plasma membrane. Functionally, confers blight susceptibility. Confers TAL effector-mediated susceptibility to Xanthomonas oryzae pv. oryzae. This is Bidirectional sugar transporter SWEET14 (SWEET14) from Oryza sativa subsp. japonica (Rice).